The following is a 420-amino-acid chain: Cysteate-C-fatty acyltransferase (420 aa).

Pyridoxal 5'-phosphate is bound by residues 114–115, histidine 219, threonine 247, and alanine 249; that span reads GY. Lysine 250 carries the post-translational modification N6-(pyridoxal phosphate)lysine.

This sequence belongs to the class-II pyridoxal-phosphate-dependent aminotransferase family. Requires pyridoxal 5'-phosphate as cofactor.

The enzyme catalyses isopentadecanoyl-CoA + L-cysteate + H(+) = 3-oxocapnine + CO2 + CoA. The protein operates within lipid metabolism. In terms of biological role, transferase involved in the biosynthesis of capnine, a sulfonolipid present in the outer membrane of gliding Bacteroidetes and essential for gliding motility. Catalyzes the formation of 3-dehydrocapnine from cysteate and isopentadecanoyl-CoA (13-methyl-myristoyl-CoA). In vitro, products are also detected when 13-methyl-myristic acid is substituted with tridecylic acid, myristic acid, pentadecanoic acid or palmitic acid. The polypeptide is Cysteate-C-fatty acyltransferase (Capnocytophaga ochracea (strain ATCC 27872 / DSM 7271 / CCUG 9716 / JCM 12966 / NCTC 12371 / SS31 / VPI 2845) (Bacteroides ochraceus)).